A 308-amino-acid chain; its full sequence is D-alanine--D-alanine ligase (308 aa).

Positions 105 to 302 constitute an ATP-grasp domain; the sequence is KAIFRSLGLA…FPDLCERILD (198 aa). Residue 133-188 participates in ATP binding; the sequence is DLPFGLPCVVKPAGEGSSVGVHLVNEAAELGPACRDAASHAGDVIVERYVKGTEVD. Mg(2+)-binding residues include Asp-256, Glu-269, and Asn-271.

Belongs to the D-alanine--D-alanine ligase family. Mg(2+) serves as cofactor. Mn(2+) is required as a cofactor.

Its subcellular location is the cytoplasm. It carries out the reaction 2 D-alanine + ATP = D-alanyl-D-alanine + ADP + phosphate + H(+). The protein operates within cell wall biogenesis; peptidoglycan biosynthesis. Functionally, cell wall formation. In Anaeromyxobacter dehalogenans (strain 2CP-1 / ATCC BAA-258), this protein is D-alanine--D-alanine ligase.